The chain runs to 641 residues: 1-deoxy-D-xylulose-5-phosphate synthase (641 aa).

Residues H80 and 121 to 123 (GHS) contribute to the thiamine diphosphate site. D152 contacts Mg(2+). Thiamine diphosphate contacts are provided by residues 153-154 (GS), N181, Y290, and E372. N181 lines the Mg(2+) pocket.

Belongs to the transketolase family. DXPS subfamily. In terms of assembly, homodimer. Mg(2+) serves as cofactor. Requires thiamine diphosphate as cofactor.

The enzyme catalyses D-glyceraldehyde 3-phosphate + pyruvate + H(+) = 1-deoxy-D-xylulose 5-phosphate + CO2. The protein operates within metabolic intermediate biosynthesis; 1-deoxy-D-xylulose 5-phosphate biosynthesis; 1-deoxy-D-xylulose 5-phosphate from D-glyceraldehyde 3-phosphate and pyruvate: step 1/1. Catalyzes the acyloin condensation reaction between C atoms 2 and 3 of pyruvate and glyceraldehyde 3-phosphate to yield 1-deoxy-D-xylulose-5-phosphate (DXP). This chain is 1-deoxy-D-xylulose-5-phosphate synthase, found in Rhodobacter capsulatus (Rhodopseudomonas capsulata).